The chain runs to 149 residues: Nucleoside diphosphate kinase (149 aa).

Residues lysine 9, phenylalanine 57, arginine 85, threonine 91, arginine 102, and asparagine 112 each coordinate ATP. The Pros-phosphohistidine intermediate role is filled by histidine 115.

It belongs to the NDK family. As to quaternary structure, homotetramer. Mg(2+) is required as a cofactor.

It is found in the cytoplasm. The enzyme catalyses a 2'-deoxyribonucleoside 5'-diphosphate + ATP = a 2'-deoxyribonucleoside 5'-triphosphate + ADP. It catalyses the reaction a ribonucleoside 5'-diphosphate + ATP = a ribonucleoside 5'-triphosphate + ADP. Functionally, major role in the synthesis of nucleoside triphosphates other than ATP. The ATP gamma phosphate is transferred to the NDP beta phosphate via a ping-pong mechanism, using a phosphorylated active-site intermediate. This chain is Nucleoside diphosphate kinase, found in Staphylococcus aureus (strain MSSA476).